Here is a 471-residue protein sequence, read N- to C-terminus: UDP-N-acetylmuramate--L-alanine ligase (471 aa).

Position 114 to 120 (Gly114 to Thr120) interacts with ATP.

It belongs to the MurCDEF family.

Its subcellular location is the cytoplasm. It catalyses the reaction UDP-N-acetyl-alpha-D-muramate + L-alanine + ATP = UDP-N-acetyl-alpha-D-muramoyl-L-alanine + ADP + phosphate + H(+). It participates in cell wall biogenesis; peptidoglycan biosynthesis. Functionally, cell wall formation. The polypeptide is UDP-N-acetylmuramate--L-alanine ligase (Sinorhizobium medicae (strain WSM419) (Ensifer medicae)).